Reading from the N-terminus, the 220-residue chain is Putative GED domain-containing protein DNM1P46 (220 aa).

The disordered stretch occupies residues 18–46; that stretch reads VSVETRNVKPQGKDSKAEENGSHSFMHSM. The span at 28-38 shows a compositional bias: basic and acidic residues; the sequence is QGKDSKAEENG. The 96-residue stretch at 54-149 folds into the GED domain; sequence METTQNLVDS…CCPTCTRLGT (96 aa). Positions 173–194 are disordered; it reads DTPGGVGRAGTAARRDSRGNEK. Over residues 185–194 the composition is skewed to basic and acidic residues; the sequence is ARRDSRGNEK.

The protein is Putative GED domain-containing protein DNM1P46 (DNM1P46) of Homo sapiens (Human).